The chain runs to 344 residues: Heat-inducible transcription repressor HrcA (344 aa).

Belongs to the HrcA family.

Functionally, negative regulator of class I heat shock genes (grpE-dnaK-dnaJ and groELS operons). Prevents heat-shock induction of these operons. The sequence is that of Heat-inducible transcription repressor HrcA from Streptococcus pneumoniae (strain 70585).